A 151-amino-acid polypeptide reads, in one-letter code: Small ribosomal subunit protein bS6 (151 aa).

Positions 98-151 (EESPIQKAEKENRERKNRAERRAAEAAAATETEKSESEESAEEETSTDTTGEEE) are disordered. The span at 135–151 (EESAEEETSTDTTGEEE) shows a compositional bias: acidic residues.

The protein belongs to the bacterial ribosomal protein bS6 family.

Binds together with bS18 to 16S ribosomal RNA. The polypeptide is Small ribosomal subunit protein bS6 (Teredinibacter turnerae (strain ATCC 39867 / T7901)).